Here is a 514-residue protein sequence, read N- to C-terminus: Alpha-1,3/1,6-mannosyltransferase ALG2 (514 aa).

N-linked (GlcNAc...) asparagine glycosylation occurs at N94. Helical transmembrane passes span 443-463 (WAVMVILAASYILWRSSHVFG) and 468-490 (YIYLLTGGILVLRSRYLLAIFWV).

It belongs to the glycosyltransferase group 1 family.

It is found in the endoplasmic reticulum membrane. The catalysed reaction is a beta-D-Man-(1-&gt;4)-beta-D-GlcNAc-(1-&gt;4)-alpha-D-GlcNAc-diphospho-di-trans,poly-cis-dolichol + GDP-alpha-D-mannose = an alpha-D-Man-(1-&gt;3)-beta-D-Man-(1-&gt;4)-beta-D-GlcNAc-(1-&gt;4)-alpha-D-GlcNAc-diphospho-di-trans,poly-cis-dolichol + GDP + H(+). The enzyme catalyses an alpha-D-Man-(1-&gt;3)-beta-D-Man-(1-&gt;4)-beta-D-GlcNAc-(1-&gt;4)-alpha-D-GlcNAc-diphospho-di-trans,poly-cis-dolichol + GDP-alpha-D-mannose = an alpha-D-Man-(1-&gt;3)-[alpha-D-Man-(1-&gt;6)]-beta-D-Man-(1-&gt;4)-beta-D-GlcNAc-(1-&gt;4)-alpha-D-GlcNAc-diphospho-di-trans,poly-cis-dolichol + GDP + H(+). The protein operates within protein modification; protein glycosylation. Its function is as follows. Mannosylates Man(2)GlcNAc(2)-dolichol diphosphate and Man(1)GlcNAc(2)-dolichol diphosphate to form Man(3)GlcNAc(2)-dolichol diphosphate. The protein is Alpha-1,3/1,6-mannosyltransferase ALG2 (ALG2) of Eremothecium gossypii (strain ATCC 10895 / CBS 109.51 / FGSC 9923 / NRRL Y-1056) (Yeast).